Here is a 338-residue protein sequence, read N- to C-terminus: L-serine dehydratase (338 aa).

The residue at position 39 (K39) is an N6-(pyridoxal phosphate)lysine.

The protein belongs to the serine/threonine dehydratase family. Requires pyridoxal 5'-phosphate as cofactor.

It localises to the cytoplasm. The enzyme catalyses L-serine = pyruvate + NH4(+). It participates in carbohydrate biosynthesis; gluconeogenesis. In Saccharomyces cerevisiae (Baker's yeast), this protein is L-serine dehydratase (SDL1).